The sequence spans 152 residues: Large ribosomal subunit protein uL13 (152 aa).

The disordered stretch occupies residues 129–152; the sequence is EHPHEAQSPEVLDVKSMNKKNTRS.

The protein belongs to the universal ribosomal protein uL13 family. Part of the 50S ribosomal subunit.

In terms of biological role, this protein is one of the early assembly proteins of the 50S ribosomal subunit, although it is not seen to bind rRNA by itself. It is important during the early stages of 50S assembly. The chain is Large ribosomal subunit protein uL13 from Ruegeria sp. (strain TM1040) (Silicibacter sp.).